We begin with the raw amino-acid sequence, 330 residues long: 7,8-didemethyl-8-hydroxy-5-deazariboflavin synthase (330 aa).

In terms of domain architecture, Radical SAM core spans 5-245 (VTFSRNVFIP…SDVAVQVAPN (241 aa)). Residues C19, C23, and C26 each coordinate [4Fe-4S] cluster.

This sequence belongs to the radical SAM superfamily. CofG family. As to quaternary structure, consists of two subunits, CofG and CofH. The cofactor is [4Fe-4S] cluster.

The enzyme catalyses 5-amino-5-(4-hydroxybenzyl)-6-(D-ribitylimino)-5,6-dihydrouracil + S-adenosyl-L-methionine = 7,8-didemethyl-8-hydroxy-5-deazariboflavin + 5'-deoxyadenosine + L-methionine + NH4(+) + H(+). Its pathway is cofactor biosynthesis; coenzyme F0 biosynthesis. In terms of biological role, catalyzes the radical-mediated synthesis of 7,8-didemethyl-8-hydroxy-5-deazariboflavin from 5-amino-5-(4-hydroxybenzyl)-6-(D-ribitylimino)-5,6-dihydrouracil. This Methanococcoides burtonii (strain DSM 6242 / NBRC 107633 / OCM 468 / ACE-M) protein is 7,8-didemethyl-8-hydroxy-5-deazariboflavin synthase.